We begin with the raw amino-acid sequence, 132 residues long: UPF0299 membrane protein YohJ (132 aa).

Transmembrane regions (helical) follow at residues 7–27, 31–51, 63–83, and 93–113; these read IIWQYIRAFVLIYACLYAGIF, LLPITIPGSIIGMLILFVLLA, GCYVLIRYMALLFVPIGVGVM, and FGPVVVSCAISTLVVFVVVSW.

Belongs to the UPF0299 family.

It is found in the cell inner membrane. This Salmonella agona (strain SL483) protein is UPF0299 membrane protein YohJ.